We begin with the raw amino-acid sequence, 282 residues long: Serine/threonine-protein kinase Aurora-2 (282 aa).

The 252-residue stretch at 19-270 (FDIGKPLGRG…LHKLLEHPWI (252 aa)) folds into the Protein kinase domain. Residues 25–33 (LGRGKFGHV) and K48 contribute to the ATP site. Catalysis depends on D142, which acts as the Proton acceptor. Residue S164 is modified to Phosphoserine. The residue at position 173 (T173) is a Phosphothreonine.

It belongs to the protein kinase superfamily. Ser/Thr protein kinase family. Aurora subfamily. Phosphorylation at Thr-173 may regulate activity and degradation of AUR2 in a cell cycle dependent manner. As to expression, abundant in roots, flowers and flower buds, low or absent in expanded leaves, stems and siliques.

The protein resides in the nucleus membrane. It localises to the cytoplasm. Its subcellular location is the cytoskeleton. It is found in the spindle. The protein localises to the spindle pole. The enzyme catalyses L-seryl-[protein] + ATP = O-phospho-L-seryl-[protein] + ADP + H(+). The catalysed reaction is L-threonyl-[protein] + ATP = O-phospho-L-threonyl-[protein] + ADP + H(+). Phosphorylates specifically 'Ser-10' of histone H3 in vitro. Associates with cytoskeletal structures that are necessary for cytokinesis and with the microtubule spindle. Might colocalize with gamma-tubulin and function in microtubule organizing centers (MTOCs). In Arabidopsis thaliana (Mouse-ear cress), this protein is Serine/threonine-protein kinase Aurora-2 (AUR2).